Consider the following 89-residue polypeptide: Large ribosomal subunit protein bL28 (89 aa).

This sequence belongs to the bacterial ribosomal protein bL28 family.

The protein is Large ribosomal subunit protein bL28 of Chlamydia abortus (strain DSM 27085 / S26/3) (Chlamydophila abortus).